The primary structure comprises 80 residues: RNA-binding protein Hfq (80 aa).

Positions 9 to 69 constitute a Sm domain; the sequence is DVFLNQVRKE…ISTILPITPI (61 aa).

It belongs to the Hfq family. As to quaternary structure, homohexamer.

RNA chaperone that binds small regulatory RNA (sRNAs) and mRNAs to facilitate mRNA translational regulation in response to envelope stress, environmental stress and changes in metabolite concentrations. Also binds with high specificity to tRNAs. This Alkaliphilus metalliredigens (strain QYMF) protein is RNA-binding protein Hfq.